The chain runs to 98 residues: uncharacterized protein (98 aa).

The HTH cro/C1-type domain occupies 37–91; it reads LITSRQQLGISQKQLETLSGVKQPMIARIEKGQTNPQLETLLKLLAPLGKTLSIV. The segment at residues 48–67 is a DNA-binding region (H-T-H motif); the sequence is QKQLETLSGVKQPMIARIEK.

This is an uncharacterized protein from Haemophilus influenzae (strain ATCC 51907 / DSM 11121 / KW20 / Rd).